A 318-amino-acid chain; its full sequence is Xanthocillin biosynthesis cluster transcription factor xanC (318 aa).

Basic and acidic residues predominate over residues 1 to 27 (MHSQTTKDEQSKDDSSNEKQDAIERRR). The segment at 1–39 (MHSQTTKDEQSKDDSSNEKQDAIERRRLQNRLSQRNHRR) is disordered. One can recognise a bZIP domain in the interval 20-52 (QDAIERRRLQNRLSQRNHRRKIRDRIAKLQERV). Residues 25 to 40 (RRRLQNRLSQRNHRRK) are basic motif. Residues 41–48 (IRDRIAKL) are leucine-zipper. Disordered stretches follow at residues 71–107 (PPAASMMESKPQGDFDSNPLASVSEDPAISNPPQRNV), 123–171 (PSSS…FSLD), and 269–318 (GRHC…SMML). Low complexity-rich tracts occupy residues 123-139 (PSSSSLPSPTSPLPFDL) and 147-171 (STNSSPSTLLNSSPSSSQLSPFSLD). Residues 293–318 (APSSTPFCPLHPSQSSSLDNYQSMML) show a composition bias toward polar residues.

This sequence belongs to the bZIP family.

It localises to the nucleus. Its function is as follows. Transcription regulator that specifically up-regulates the gene cluster that mediates the biosynthesis of the isocyanide xanthocillin and its derivatives. In Aspergillus fumigatus (strain ATCC MYA-4609 / CBS 101355 / FGSC A1100 / Af293) (Neosartorya fumigata), this protein is Xanthocillin biosynthesis cluster transcription factor xanC.